A 338-amino-acid polypeptide reads, in one-letter code: Tetraacyldisaccharide 4'-kinase (338 aa).

An ATP-binding site is contributed by 63–70; it reads TVGGSGKT.

Belongs to the LpxK family.

The catalysed reaction is a lipid A disaccharide + ATP = a lipid IVA + ADP + H(+). Its pathway is glycolipid biosynthesis; lipid IV(A) biosynthesis; lipid IV(A) from (3R)-3-hydroxytetradecanoyl-[acyl-carrier-protein] and UDP-N-acetyl-alpha-D-glucosamine: step 6/6. Functionally, transfers the gamma-phosphate of ATP to the 4'-position of a tetraacyldisaccharide 1-phosphate intermediate (termed DS-1-P) to form tetraacyldisaccharide 1,4'-bis-phosphate (lipid IVA). The chain is Tetraacyldisaccharide 4'-kinase from Shewanella loihica (strain ATCC BAA-1088 / PV-4).